A 105-amino-acid polypeptide reads, in one-letter code: Small ribosomal subunit protein bS20 (105 aa).

It belongs to the bacterial ribosomal protein bS20 family.

Functionally, binds directly to 16S ribosomal RNA. This Moorella thermoacetica (strain ATCC 39073 / JCM 9320) protein is Small ribosomal subunit protein bS20.